The following is a 471-amino-acid chain: Neuraminidase (471 aa).

At methionine 1–lysine 6 the chain is on the intravirion side. The helical transmembrane segment at leucine 7 to serine 27 threads the bilayer. Residues serine 11–valine 33 are involved in apical transport and lipid raft association. At asparagine 28–serine 471 the chain is on the virion surface side. N-linked (GlcNAc...) asparagine; by host glycosylation is found at asparagine 32, asparagine 47, asparagine 56, asparagine 57, asparagine 67, asparagine 68, and asparagine 87. Residues histidine 36–asparagine 87 form a hypervariable stalk region region. Residues leucine 90–serine 471 form a head of neuraminidase region. Disulfide bonds link cysteine 91/cysteine 419, cysteine 123/cysteine 128, cysteine 183/cysteine 230, cysteine 232/cysteine 237, cysteine 278/cysteine 291, cysteine 280/cysteine 289, cysteine 318/cysteine 336, and cysteine 423/cysteine 450. Arginine 117 is a binding site for substrate. Asparagine 145 carries an N-linked (GlcNAc...) asparagine; by host glycan. Aspartate 150 serves as the catalytic Proton donor/acceptor. A substrate-binding site is contributed by arginine 151. Residues asparagine 200 and asparagine 234 are each glycosylated (N-linked (GlcNAc...) asparagine; by host). Residue glutamate 276–glutamate 277 participates in substrate binding. Arginine 292 serves as a coordination point for substrate. Ca(2+) contacts are provided by aspartate 293, glycine 297, and aspartate 324. Arginine 371 provides a ligand contact to substrate. N-linked (GlcNAc...) asparagine; by host glycosylation occurs at asparagine 401. Tyrosine 405 functions as the Nucleophile in the catalytic mechanism.

This sequence belongs to the glycosyl hydrolase 34 family. As to quaternary structure, homotetramer. Requires Ca(2+) as cofactor. N-glycosylated.

Its subcellular location is the virion membrane. The protein resides in the host apical cell membrane. The enzyme catalyses Hydrolysis of alpha-(2-&gt;3)-, alpha-(2-&gt;6)-, alpha-(2-&gt;8)- glycosidic linkages of terminal sialic acid residues in oligosaccharides, glycoproteins, glycolipids, colominic acid and synthetic substrates.. Inhibited by the neuraminidase inhibitors zanamivir (Relenza) and oseltamivir (Tamiflu). These drugs interfere with the release of progeny virus from infected cells and are effective against all influenza strains. Resistance to neuraminidase inhibitors is quite rare. Catalyzes the removal of terminal sialic acid residues from viral and cellular glycoconjugates. Cleaves off the terminal sialic acids on the glycosylated HA during virus budding to facilitate virus release. Additionally helps virus spread through the circulation by further removing sialic acids from the cell surface. These cleavages prevent self-aggregation and ensure the efficient spread of the progeny virus from cell to cell. Otherwise, infection would be limited to one round of replication. Described as a receptor-destroying enzyme because it cleaves a terminal sialic acid from the cellular receptors. May facilitate viral invasion of the upper airways by cleaving the sialic acid moieties on the mucin of the airway epithelial cells. Likely to plays a role in the budding process through its association with lipid rafts during intracellular transport. May additionally display a raft-association independent effect on budding. Plays a role in the determination of host range restriction on replication and virulence. Sialidase activity in late endosome/lysosome traffic seems to enhance virus replication. The chain is Neuraminidase from Influenza A virus (strain A/Duck/Germany/1949 H10N7).